A 1009-amino-acid chain; its full sequence is MREEALESICAALSISFTEDPDHLESIIDRFSEIFKVKDHLNQLRKKCEKFQTFTLEIRPVGSSNCTENVYAYIIESETCRQLELKPTGTTKLEIGSDKNVSLKFGLSQKKDSTTSKKGLSRSASLLKKLKFSDKKNLDELKISIFPLDIAVRKNINLGSGKSTLLEMKLIRNDHRNMIQCLEFDDFLEMTRSFHEWQAQISESELYDGSLGDPTFSMFYSIAFFFEIPSFVLKLTEMTCFLVWDDEMKKLDERALADVSLKMTACESEVDLQHPLLSPALSYLNDCTCNTIRCILVPFSTEPFFPPVSPSRLKSINVALKLIADICVLDVWDEFENLANPSNFLSSELKKLLESSAERYGESLKKQEFNELCRTILNLWMSLSNESQPYYIFFHQFDINYIGAAMLKLDKYLAESIQISLKCQLDLLNLRIPTELENFTKTTMRLFVTLRNLLNMVEAFHLPECQLFHFEEWFTDISVFWTYSWREVTLQMVERTITLDEDGDSVKYGARRPLPAGLYSFLCIQKGISDDLARLEFTFPHHLVVCAASVVNIMCQNINAYARKLFSEAMRNHEEKASRLVRATNGIEQAMCFVEEGYRRFAQFQRLEEYVDVDDLSAVRSTSIRLLKSTRDTCEIQVSTLLSHFVNLKTDIVLKIAKNLCADGKESNSGLKSYMRELASSERIESILECCYGLVDDVRCLLLPNCFKLSTQHFATSLEQQIRKNIRQKQPAEYYSNIYVGFLNILIFKRLKQMYLKFQIALKYIYEFLEIEDRKDIELLSNLHLNSFSTKDLILSYYDSLCEKIDRTRFGNAPHVDVHISYVKMVDEDTISIQIKLIKMSPIEWIDVISDRVDYFVRLELFPKILFPSNKFESPTTNPMPQSTRPQWKQLFEIRVPLECFFLRGACLAISVFDHERFIDRLVGRGFISLHSVPQASEEKPTQRLQVPLLPNDFSDQNNVFYQLLKTRACRDSIAKEFIETRTRRHQRIRALQHYIRINRNRVGHMLLG.

The region spanning 812–945 (NAPHVDVHIS…ASEEKPTQRL (134 aa)) is the C2 domain.

The protein belongs to the unc-13 family. Expressed in intestine, body wall muscles and some amphid neurons.

In terms of biological role, involved in retrograde signaling from post-synaptic cells to pre-synaptic neurons, probably by regulating vesicle exocytosis in post-synaptic cells. Acts in muscles, to regulate the localization of synaptic vesicle fusion protein unc-13 likely during vesicle exocytosis and thus regulate retrograde signaling at the neuromuscular junction (NMJ). Regulates anterior body muscle contractions (aBOC) and the expulsion steps during the defecation motor program (DMP). Probably by regulating DMP, plays a homeostatic role in the uptake of triglycerides. Regulates locomotion. The protein is C2 domain-containing protein aex-1 of Caenorhabditis elegans.